Consider the following 831-residue polypeptide: Periplasmic nitrate reductase (831 aa).

Residues 1–35 constitute a signal peptide (tat-type signal); that stretch reads MTISDSRRTFLKASAAAATASAAGIPLANGTAAEA. A 4Fe-4S Mo/W bis-MGD-type domain is found at 42 to 98; the sequence is IRWDKAACRFCGTGCSVLVGTKEGRVVATQGDPDAPVNRGLNCIKGYFLSKIMYGED. Residues Cys49, Cys52, Cys56, and Cys84 each contribute to the [4Fe-4S] cluster site. Mo-bis(molybdopterin guanine dinucleotide) contacts are provided by residues Lys86, Gln153, Asn178, Cys182, 215 to 222, 246 to 250, 265 to 267, Met375, Gln379, Asn485, 511 to 512, Lys534, Asp561, and 721 to 730; these read WGSNMAEM, STYEH, QTD, SD, and TGRVLEHWHS. Trp797 contributes to the substrate binding site. Residues Asn805 and Lys822 each contribute to the Mo-bis(molybdopterin guanine dinucleotide) site.

Belongs to the prokaryotic molybdopterin-containing oxidoreductase family. NasA/NapA/NarB subfamily. As to quaternary structure, component of the periplasmic nitrate reductase NapAB complex composed of NapA and NapB. [4Fe-4S] cluster is required as a cofactor. Mo-bis(molybdopterin guanine dinucleotide) serves as cofactor. Predicted to be exported by the Tat system. The position of the signal peptide cleavage has not been experimentally proven.

The protein localises to the periplasm. The catalysed reaction is 2 Fe(II)-[cytochrome] + nitrate + 2 H(+) = 2 Fe(III)-[cytochrome] + nitrite + H2O. Catalytic subunit of the periplasmic nitrate reductase complex NapAB. Receives electrons from NapB and catalyzes the reduction of nitrate to nitrite. This Dinoroseobacter shibae (strain DSM 16493 / NCIMB 14021 / DFL 12) protein is Periplasmic nitrate reductase.